A 459-amino-acid chain; its full sequence is DNA primase large subunit (459 aa).

[4Fe-4S] cluster is bound by residues Cys291, Cys369, Cys386, and Cys428.

The protein belongs to the eukaryotic-type primase large subunit family. As to quaternary structure, heterodimer of a catalytic subunit spp1/pri1 and a regulatory subunit spp2/pri2, also known as the DNA primase complex. Component of the alpha DNA polymerase complex (also known as the alpha DNA polymerase-primase complex) consisting of four subunits: the catalytic subunit pol1, the accessory subunit spb70/pol12, and the primase complex subunits spp1/pri1 and spp2/pri2 respectively. Interacts with orc2; preferentially associates with the unphosphorylated orc2 in G1 pre-Start prior to orc2 being phosphorylated by cdc2, the interaction is mediated by spb70 and might enable the association of the whole alpha DNA polymerase complex to orc2/spb70 complex on chromatin. [4Fe-4S] cluster serves as cofactor.

The protein resides in the nucleus. Its subcellular location is the chromosome. In terms of biological role, regulatory subunit of the DNA primase complex and component of the DNA polymerase alpha complex (also known as the alpha DNA polymerase-primase complex - primosome/replisome) which play an essential role in the initiation of DNA synthesis. During the S phase of the cell cycle, the DNA polymerase alpha complex (composed of a catalytic subunit pol1, an accessory subunit spb70/pol12 and two primase subunits, the catalytic subunit spp1/pri1 and the regulatory subunit spp2/pri2) is recruited to DNA at the replicative forks. The primase subunit of the polymerase alpha complex initiates DNA synthesis by oligomerising short RNA primers on both leading and lagging strands. The chain is DNA primase large subunit from Schizosaccharomyces pombe (strain 972 / ATCC 24843) (Fission yeast).